The sequence spans 207 residues: Ras-related protein Rab-8B (207 aa).

The GTP site is built by S17, G18, V19, G20, K21, T22, C23, T35, S39, and T40. T22 contributes to the Mg(2+) binding site. 2 short sequence motifs (switch) span residues 31-45 (DAFN…GIDF) and 63-80 (DTAG…YYRG). T40 and D63 together coordinate Mg(2+). Position 66 (G66) interacts with GTP. T72 carries the post-translational modification Phosphothreonine; by LRRK2. The GTP site is built by N121, K122, D124, A152, and K153. At S180 the chain carries Phosphoserine. Position 204 is a cysteine methyl ester (C204). C204 is lipidated: S-geranylgeranyl cysteine. The propeptide at 205–207 (SLL) is removed in mature form.

Belongs to the small GTPase superfamily. Rab family. In terms of assembly, associated with actin, delta-catenin and alpha and beta tubulins. Interacts with OTOF. Interacts with PEX5R. Interacts with RAB3IP. Interacts with VIM. Interacts with CDH1. Interacts with MICALL2. Interacts with GDI1, GDI2, CHML and CHM; phosphorylation at Thr-72 disrupts these interactions. Interacts with MICAL1. It depends on Mg(2+) as a cofactor. Phosphorylation of Thr-72 in the switch II region by LRRK2 prevents the association of RAB regulatory proteins, including CHM, CHML and RAB GDP dissociation inhibitors GDI1 and GDI2.

Its subcellular location is the cell membrane. The protein resides in the cytoplasmic vesicle. It localises to the phagosome. The protein localises to the phagosome membrane. It is found in the endosome membrane. It catalyses the reaction GTP + H2O = GDP + phosphate + H(+). Regulated by guanine nucleotide exchange factors (GEFs) including RAB3IP/RABIN8 which promotes the exchange of bound GDP for free GTP. Regulated by GTPase activating proteins (GAPs) which increase the GTP hydrolysis activity. Inhibited by GDP dissociation inhibitors (GDIs). Functionally, the small GTPases Rab are key regulators of intracellular membrane trafficking, from the formation of transport vesicles to their fusion with membranes. Rabs cycle between an inactive GDP-bound form and an active GTP-bound form that is able to recruit to membranes different sets of downstream effectors directly responsible for vesicle formation, movement, tethering and fusion. RAB8B may be involved in polarized vesicular trafficking and neurotransmitter release. May participate in cell junction dynamics in Sertoli cells. May also participate in the export of a subset of neosynthesized proteins through a Rab8-Rab10-Rab11-dependent endososomal export route. This chain is Ras-related protein Rab-8B, found in Homo sapiens (Human).